The primary structure comprises 2452 residues: Lovastatin diketide synthase lovF (2452 aa).

In terms of domain architecture, Ketosynthase family 3 (KS3) spans 10-381; that stretch reads PAPIAVVGMG…GANAHAIVER (372 aa). Residues C173, H308, and H343 each act as for beta-ketoacyl synthase activity in the active site. Residues 496–790 are malonyl-CoA:ACP transacylase (MAT) domain; it reads VFTGQGAQWF…PYLSCLSRGK (295 aa). The active-site For malonyltransferase activity is the S555. The N-terminal hotdog fold stretch occupies residues 861-998; that stretch reads HDLIGLQEPL…GLVRVDMDQP (138 aa). The interval 861-1166 is dehydratase (DH) domain; sequence HDLIGLQEPL…LEGLVFQSLG (306 aa). One can recognise a PKS/mFAS DH domain in the interval 861–1171; sequence HDLIGLQEPL…FQSLGASLGT (311 aa). H893 functions as the Proton acceptor; for dehydratase activity in the catalytic mechanism. The tract at residues 997–1017 is disordered; sequence QPASSLSNPQRADPRPWSRKT. The tract at residues 1012–1171 is C-terminal hotdog fold; the sequence is PWSRKTAPQD…FQSLGASLGT (160 aa). The active-site Proton donor; for dehydratase activity is D1079. Positions 1343–1528 are methyltransferase (CMet) domain; the sequence is ELVRLCCHKN…RDCDSDEFYM (186 aa). The interval 1745–2064 is enoylreductase (ER) domain; the sequence is GLLDSLYFRK…SGQHVGKIVV (320 aa). The segment at 2088–2260 is ketoreductase (KR) domain; that stretch reads SYLVAGGLGG…AVTIDLGMVQ (173 aa). Residues 2373-2450 enclose the Carrier domain; sequence ASIAVIMEAM…KVAEVVLQRY (78 aa). S2410 is subject to O-(pantetheine 4'-phosphoryl)serine.

In terms of assembly, interacts with LovD. Pantetheine 4'-phosphate serves as cofactor.

It catalyses the reaction holo-[2-methylbutanoate polyketide synthase] + 2 malonyl-CoA + S-adenosyl-L-methionine + 2 NADPH + 3 H(+) = (S)-2-methylbutanoyl-[2-methylbutanoate polyketide synthase] + S-adenosyl-L-homocysteine + 2 CO2 + 2 NADP(+) + 2 CoA + H2O. The protein operates within polyketide biosynthesis; lovastatin biosynthesis. Its function is as follows. Lovastatin diketide synthase; part of the gene cluster that mediates the biosynthesis of lovastatin (also known as mevinolin, mevacor or monacolin K), a hypolipidemic inhibitor of (3S)-hydroxymethylglutaryl-coenzyme A (HMG-CoA) reductase (HMGR). The first step in the biosynthesis of lovastatin is the production of dihydromonacolin L acid by the lovastatin nonaketide synthase lovB and the trans-acting enoyl reductase lovC via condensation of one acetyl-CoA unit and 8 malonyl-CoA units. Dihydromonacolin L acid is released from lovB by the thioesterase lovG. Next, dihydromonacolin L acid is oxidized by the dihydromonacolin L monooxygenase lovA twice to form monacolin J acid. The 2-methylbutyrate moiety of lovastatin is synthesized by the lovastatin diketide synthase lovF via condensation of one acetyl-CoA unit and one malonyl-CoA unit. Finally, the covalent attachment of this moiety to monacolin J acid is catalyzed by the transesterase lovD to yield lovastatin. LovD has broad substrate specificity and can also convert monacolin J to simvastatin using alpha-dimethylbutanoyl-S-methyl-3-mercaptopropionate (DMB-S-MMP) as the thioester acyl donor, and can also catalyze the reverse reaction and function as hydrolase in vitro. LovD has much higher activity with LovF-bound 2-methylbutanoate than with free diketide substrates. The polypeptide is Lovastatin diketide synthase lovF (Aspergillus terreus (strain NIH 2624 / FGSC A1156)).